Consider the following 684-residue polypeptide: Ski-like protein (684 aa).

Glycyl lysine isopeptide (Lys-Gly) (interchain with G-Cter in SUMO2) cross-links involve residues K50 and K70. The interval 420–454 (SQSKELTKTEASKSISRQSEKAHSSGKLQKTVSYP) is disordered. Residue S452 is modified to Phosphoserine. Residues K489 and K527 each participate in a glycyl lysine isopeptide (Lys-Gly) (interchain with G-Cter in SUMO2) cross-link. Residues 536–684 (RTYLKQQEKL…ILKSSKTAKE (149 aa)) adopt a coiled-coil conformation.

Belongs to the SKI family. In terms of assembly, interacts with CPNE4 (via VWFA domain). Interacts with SMAD2, SMAD3 and RNF111. Isoform 1 interacts with WWP1. Post-translationally, ubiquitinated by RNF111 and ARK2C, promoting proteasomal degradation, leading to enhance the BMP-Smad signaling. Isoform SNON and isoform SNOA are widely expressed. Highest expression is found in skeletal muscle, followed by placenta and lung. Lowest expression in heart, brain and pancreas. Isoform SNOI expression is restricted to skeletal muscle.

May have regulatory role in cell division or differentiation in response to extracellular signals. The protein is Ski-like protein (SKIL) of Homo sapiens (Human).